Reading from the N-terminus, the 362-residue chain is Histidinol-phosphate aminotransferase (362 aa).

Lysine 218 is modified (N6-(pyridoxal phosphate)lysine).

It belongs to the class-II pyridoxal-phosphate-dependent aminotransferase family. Histidinol-phosphate aminotransferase subfamily. In terms of assembly, homodimer. Pyridoxal 5'-phosphate is required as a cofactor.

It catalyses the reaction L-histidinol phosphate + 2-oxoglutarate = 3-(imidazol-4-yl)-2-oxopropyl phosphate + L-glutamate. Its pathway is amino-acid biosynthesis; L-histidine biosynthesis; L-histidine from 5-phospho-alpha-D-ribose 1-diphosphate: step 7/9. In Xanthomonas campestris pv. campestris (strain ATCC 33913 / DSM 3586 / NCPPB 528 / LMG 568 / P 25), this protein is Histidinol-phosphate aminotransferase.